The primary structure comprises 118 residues: MRNNKTPFLSAIFTASIRGYQRFFSAFTPSSCRFYPTCSNYALWLLYFESPLSAMGKIAIRILSCNPFCSGGIAYPVTRLKRPSLLQSHKDFNRNFKTITFWLVPTAKSRTTYYIIKV.

The protein belongs to the UPF0161 family.

It localises to the cell inner membrane. Could be involved in insertion of integral membrane proteins into the membrane. In Helicobacter pylori (strain P12), this protein is Putative membrane protein insertion efficiency factor.